A 73-amino-acid chain; its full sequence is Translation initiation factor IF-1 (73 aa).

The S1-like domain maps to 1-72; it reads MAKEDVIEVE…SRGRITYRYR (72 aa).

It belongs to the IF-1 family. Component of the 30S ribosomal translation pre-initiation complex which assembles on the 30S ribosome in the order IF-2 and IF-3, IF-1 and N-formylmethionyl-tRNA(fMet); mRNA recruitment can occur at any time during PIC assembly.

It is found in the cytoplasm. In terms of biological role, one of the essential components for the initiation of protein synthesis. Stabilizes the binding of IF-2 and IF-3 on the 30S subunit to which N-formylmethionyl-tRNA(fMet) subsequently binds. Helps modulate mRNA selection, yielding the 30S pre-initiation complex (PIC). Upon addition of the 50S ribosomal subunit IF-1, IF-2 and IF-3 are released leaving the mature 70S translation initiation complex. This Rubrobacter xylanophilus (strain DSM 9941 / JCM 11954 / NBRC 16129 / PRD-1) protein is Translation initiation factor IF-1.